The following is an 88-amino-acid chain: HssA/B-like protein 13 (88 aa).

This sequence belongs to the hssA/B family.

The chain is HssA/B-like protein 13 (hssl13) from Dictyostelium discoideum (Social amoeba).